The following is a 310-amino-acid chain: Ribosomal RNA small subunit methyltransferase H (310 aa).

S-adenosyl-L-methionine contacts are provided by residues 32-34 (GGH), Asp-52, Phe-79, Asp-100, and Gln-107.

The protein belongs to the methyltransferase superfamily. RsmH family.

The protein resides in the cytoplasm. It carries out the reaction cytidine(1402) in 16S rRNA + S-adenosyl-L-methionine = N(4)-methylcytidine(1402) in 16S rRNA + S-adenosyl-L-homocysteine + H(+). Its function is as follows. Specifically methylates the N4 position of cytidine in position 1402 (C1402) of 16S rRNA. This is Ribosomal RNA small subunit methyltransferase H from Bacillus mycoides (strain KBAB4) (Bacillus weihenstephanensis).